The chain runs to 798 residues: PR domain zinc finger protein 4 (798 aa).

Positions 408–525 (KQLVLRQSIV…PENELLFYYS (118 aa)) constitute an SET domain. C2H2-type zinc fingers lie at residues 586–608 (WKCS…FMGH), 614–636 (HKCD…LKIH), 642–664 (YRCT…MVIH), 670–692 (LKCD…VLIH), and 698–720 (IKCP…LNSH). The C2H2-type 6; degenerate zinc-finger motif lies at 726 to 747 (YVCEKCTKAYLTKYHLTRHLKA). Positions 750–798 (EPASSSSAQDDEDEDGDSGEDGLPGSMTTEGCRMSSAVYSADESLSAHK) are disordered. Positions 758-769 (QDDEDEDGDSGE) are enriched in acidic residues.

The protein belongs to the class V-like SAM-binding methyltransferase superfamily.

The protein localises to the nucleus. Functionally, may function as a transcription factor involved in cell differentiation. In Rattus norvegicus (Rat), this protein is PR domain zinc finger protein 4 (Prdm4).